Consider the following 174-residue polypeptide: Small ribosomal subunit protein bS16 (174 aa).

Residues 81–174 (QRFTGEPAPP…DATTDATPSA (94 aa)) form a disordered region. The span at 87 to 97 (PAPPPMKTAPP) shows a compositional bias: pro residues. Positions 98-118 (KPDKKALFEAAAKEAAGEPRA) are enriched in basic and acidic residues. The span at 135-158 (ETTPAAEAAPDAAASADEPAGGAS) shows a compositional bias: low complexity. The span at 160-174 (AAESQDATTDATPSA) shows a compositional bias: polar residues.

Belongs to the bacterial ribosomal protein bS16 family.

The polypeptide is Small ribosomal subunit protein bS16 (Acidothermus cellulolyticus (strain ATCC 43068 / DSM 8971 / 11B)).